Here is a 145-residue protein sequence, read N- to C-terminus: Arginine repressor (145 aa).

The protein belongs to the ArgR family.

The protein localises to the cytoplasm. It functions in the pathway amino-acid biosynthesis; L-arginine biosynthesis [regulation]. Regulates arginine biosynthesis genes. The sequence is that of Arginine repressor from Streptococcus mutans serotype c (strain ATCC 700610 / UA159).